A 99-amino-acid chain; its full sequence is Putative transmembrane protein ORF13 (99 aa).

3 helical membrane-spanning segments follow: residues 8-28 (IATFGIGDTVTTIIGLSMAGI), 42-62 (LGLFGIIAAKVLYFGLMYIIV), and 73-93 (GPITITVLGTLICLWNIAIIA).

The protein resides in the host membrane. This is Putative transmembrane protein ORF13 from His1 virus (isolate Australia/Victoria) (His1V).